Here is a 275-residue protein sequence, read N- to C-terminus: NH(3)-dependent NAD(+) synthetase (275 aa).

Position 47-54 (47-54) interacts with ATP; that stretch reads GISGGQDS. D53 contacts Mg(2+). Deamido-NAD(+) is bound at residue R141. T161 is a binding site for ATP. E166 serves as a coordination point for Mg(2+). Deamido-NAD(+)-binding residues include K174 and D181. Residues K190 and T212 each coordinate ATP. Position 261–262 (261–262) interacts with deamido-NAD(+); sequence HK.

It belongs to the NAD synthetase family. In terms of assembly, homodimer.

It catalyses the reaction deamido-NAD(+) + NH4(+) + ATP = AMP + diphosphate + NAD(+) + H(+). Its pathway is cofactor biosynthesis; NAD(+) biosynthesis; NAD(+) from deamido-NAD(+) (ammonia route): step 1/1. In terms of biological role, catalyzes the ATP-dependent amidation of deamido-NAD to form NAD. Uses ammonia as a nitrogen source. The protein is NH(3)-dependent NAD(+) synthetase of Lacticaseibacillus paracasei (strain ATCC 334 / BCRC 17002 / CCUG 31169 / CIP 107868 / KCTC 3260 / NRRL B-441) (Lactobacillus paracasei).